The following is a 228-amino-acid chain: Aquaporin Z (228 aa).

The next 2 membrane-spanning stretches (helical) occupy residues 1–21 (MLNKLSAEFFGTFWLVFGGCG) and 23–43 (AILAAAFPELGIGFLGVALAF). The short motif at 63-65 (NPA) is the NPA 1 element. The next 3 helical transmembrane spans lie at 82-102 (IPYWVAQVLGAIAAAAILYVI), 129-149 (MMAGLLIEIILTAFFIIIILG), and 154-174 (LAPAGFAPIAIGFGLTLIHLV). The short motif at 184-186 (NPA) is the NPA 2 element. The chain crosses the membrane as a helical span at residues 205-225 (LFWVAPLVGAVIGAIIWKGLL).

This sequence belongs to the MIP/aquaporin (TC 1.A.8) family. Homotetramer.

The protein localises to the cell inner membrane. The catalysed reaction is H2O(in) = H2O(out). Its function is as follows. Channel that permits osmotically driven movement of water in both directions. It is involved in the osmoregulation and in the maintenance of cell turgor during volume expansion in rapidly growing cells. It mediates rapid entry or exit of water in response to abrupt changes in osmolarity. The chain is Aquaporin Z from Brucella abortus biovar 1 (strain 9-941).